The following is a 526-amino-acid chain: Vang-like protein 2 (526 aa).

The interval 1-95 (MDNESQYSGY…NEDLTRASKE (95 aa)) is disordered. At 1–109 (MDNESQYSGY…SPLECRRFAG (109 aa)) the chain is on the cytoplasmic side. Basic residues predominate over residues 15–33 (SHSRSSRKHRDRRDRHRSK). Basic and acidic residues-rich tracts occupy residues 34–43 (SRDSSSRGDK) and 58–68 (ESTRGDDRDDN). Residues 70-83 (GETTTVVTGTSEHS) are compositionally biased toward low complexity. Over residues 84–95 (VSNEDLTRASKE) the composition is skewed to basic and acidic residues. The helical transmembrane segment at 110–130 (PIVSGVLGLFALLTPLAFLLL) threads the bilayer. Residues 131–148 (PQLLWRDSLEPCGTPCEG) lie on the Extracellular side of the membrane. Residues 149 to 169 (LYVSLAFKLLVLLISSWALFL) form a helical membrane-spanning segment. At 170-178 (RPSRSTLPR) the chain is on the cytoplasmic side. Residues 179–199 (FFVFRCLLMALVFLFVASYWL) form a helical membrane-spanning segment. Topologically, residues 200–215 (FYGVRVLEPRERDYRG) are extracellular. The chain crosses the membrane as a helical span at residues 216 to 236 (IVGYAVSLVDALLFIQYLALV). At 237 to 526 (LLEVRHLRPA…VMRLQSETSV (290 aa)) the chain is on the cytoplasmic side. The PDZ-binding signature appears at 523-526 (ETSV).

Belongs to the Vang family. As to quaternary structure, interacts with the PDZ domain of dvl2/dsh. Ubiquitously expressed at the 4-cell stage. In early somitogenesis, becomes more abundant in anterior neural tissue where expression is seen in the neural tube but not in the notochord.

It is found in the cell membrane. In terms of biological role, plays a role in non-canonical Wnt/planar cell polarity (PCP) signaling to regulate convergent extension cell movements during gastrulation. Acts together with scrib and prickle1 and localizes prickle1 and dvl2/dsh to the plasma membrane. Has an overlapping role with kny during both convergent extension and eye development. In the eye, involved in establishing proper alignment of the anterior neural plate and midline cells expressing shha and shhb/twhh. Has indirect effects on a number of other developmental processes including notochord shape formation, neural progenitor cell morphogenesis, segregation of somites and adaxial cell development. Together with prickle1, required for the posterior (caudal) movement of branchiomotor neurons in the hindbrain independently of, and a few hours after, convergent extension. May be required for cell surface localization of fzd3 and fzd6 in the inner ear. This Danio rerio (Zebrafish) protein is Vang-like protein 2.